The chain runs to 872 residues: Leucine--tRNA ligase (872 aa).

The short motif at Pro56 to His66 is the 'HIGH' region element. Positions Lys629–Ser633 match the 'KMSKS' region motif. Lys632 contributes to the ATP binding site.

Belongs to the class-I aminoacyl-tRNA synthetase family.

The protein resides in the cytoplasm. The enzyme catalyses tRNA(Leu) + L-leucine + ATP = L-leucyl-tRNA(Leu) + AMP + diphosphate. This chain is Leucine--tRNA ligase, found in Prochlorococcus marinus (strain MIT 9211).